The primary structure comprises 304 residues: Elongation factor Ts (304 aa).

Residues 80–83 (TDFV) form an involved in Mg(2+) ion dislocation from EF-Tu region.

It belongs to the EF-Ts family.

Its subcellular location is the cytoplasm. Associates with the EF-Tu.GDP complex and induces the exchange of GDP to GTP. It remains bound to the aminoacyl-tRNA.EF-Tu.GTP complex up to the GTP hydrolysis stage on the ribosome. The protein is Elongation factor Ts of Clostridium tetani (strain Massachusetts / E88).